The following is a 372-amino-acid chain: tRNA pseudouridine synthase D (372 aa).

Aspartate 85 (nucleophile) is an active-site residue. The region spanning 160–330 (GFTNYFGYQR…MQGSRRFMWG (171 aa)) is the TRUD domain.

It belongs to the pseudouridine synthase TruD family.

The enzyme catalyses uridine(13) in tRNA = pseudouridine(13) in tRNA. Responsible for synthesis of pseudouridine from uracil-13 in transfer RNAs. The polypeptide is tRNA pseudouridine synthase D (Campylobacter jejuni (strain RM1221)).